We begin with the raw amino-acid sequence, 388 residues long: 1-deoxy-D-xylulose 5-phosphate reductoisomerase (388 aa).

Positions 15, 16, 17, 18, and 127 each coordinate NADPH. A 1-deoxy-D-xylulose 5-phosphate-binding site is contributed by K128. Position 129 (E129) interacts with NADPH. Residue D153 participates in Mn(2+) binding. 1-deoxy-D-xylulose 5-phosphate contacts are provided by S154, E155, S179, and H202. E155 is a Mn(2+) binding site. G208 contributes to the NADPH binding site. The 1-deoxy-D-xylulose 5-phosphate site is built by S215, N220, K221, and E224. A Mn(2+)-binding site is contributed by E224.

Belongs to the DXR family. Requires Mg(2+) as cofactor. The cofactor is Mn(2+).

It catalyses the reaction 2-C-methyl-D-erythritol 4-phosphate + NADP(+) = 1-deoxy-D-xylulose 5-phosphate + NADPH + H(+). It participates in isoprenoid biosynthesis; isopentenyl diphosphate biosynthesis via DXP pathway; isopentenyl diphosphate from 1-deoxy-D-xylulose 5-phosphate: step 1/6. In terms of biological role, catalyzes the NADPH-dependent rearrangement and reduction of 1-deoxy-D-xylulose-5-phosphate (DXP) to 2-C-methyl-D-erythritol 4-phosphate (MEP). This chain is 1-deoxy-D-xylulose 5-phosphate reductoisomerase, found in Bacteroides fragilis (strain ATCC 25285 / DSM 2151 / CCUG 4856 / JCM 11019 / LMG 10263 / NCTC 9343 / Onslow / VPI 2553 / EN-2).